A 79-amino-acid chain; its full sequence is Putative membrane protein insertion efficiency factor (79 aa).

It belongs to the UPF0161 family.

The protein localises to the cell inner membrane. Its function is as follows. Could be involved in insertion of integral membrane proteins into the membrane. The protein is Putative membrane protein insertion efficiency factor of Cytophaga hutchinsonii (strain ATCC 33406 / DSM 1761 / CIP 103989 / NBRC 15051 / NCIMB 9469 / D465).